Consider the following 215-residue polypeptide: Cytochrome b6 (215 aa).

A helical transmembrane segment spans residues 32-52; it reads LFYCLGGITLTCFLIQVATGF. A heme c-binding site is contributed by C35. Heme b-binding residues include H86 and H100. Transmembrane regions (helical) follow at residues 90–110, 116–136, and 186–206; these read ASMMVLMMVLHVFRVYLTGGF, STWVTGVIMASCTVSFGVTGY, and LHTFVLPLLTAVFMLGHFLMI. Heme b is bound by residues H187 and H202.

The protein belongs to the cytochrome b family. PetB subfamily. As to quaternary structure, the 4 large subunits of the cytochrome b6-f complex are cytochrome b6, subunit IV (17 kDa polypeptide, PetD), cytochrome f and the Rieske protein, while the 4 small subunits are PetG, PetL, PetM and PetN. The complex functions as a dimer. Heme b serves as cofactor. Requires heme c as cofactor.

It localises to the plastid. The protein localises to the chloroplast thylakoid membrane. Its function is as follows. Component of the cytochrome b6-f complex, which mediates electron transfer between photosystem II (PSII) and photosystem I (PSI), cyclic electron flow around PSI, and state transitions. The chain is Cytochrome b6 from Bigelowiella natans (Pedinomonas minutissima).